The following is a 213-amino-acid chain: Kynurenine formamidase (213 aa).

Residue Trp-18 participates in substrate binding. Positions 48, 52, and 54 each coordinate Zn(2+). Residue His-58 is the Proton donor/acceptor of the active site. Zn(2+)-binding residues include His-160 and Glu-172.

The protein belongs to the Cyclase 1 superfamily. KynB family. In terms of assembly, homodimer. Zn(2+) is required as a cofactor.

The enzyme catalyses N-formyl-L-kynurenine + H2O = L-kynurenine + formate + H(+). It functions in the pathway amino-acid degradation; L-tryptophan degradation via kynurenine pathway; L-kynurenine from L-tryptophan: step 2/2. Catalyzes the hydrolysis of N-formyl-L-kynurenine to L-kynurenine, the second step in the kynurenine pathway of tryptophan degradation. The chain is Kynurenine formamidase from Burkholderia ambifaria (strain MC40-6).